The sequence spans 89 residues: Small ribosomal subunit protein uS15 (89 aa).

Residues 1 to 23 (MSLGTEEKQNLINTHQVHPTDTG) are disordered. Over residues 10–23 (NLINTHQVHPTDTG) the composition is skewed to polar residues.

This sequence belongs to the universal ribosomal protein uS15 family. Part of the 30S ribosomal subunit. Forms a bridge to the 50S subunit in the 70S ribosome, contacting the 23S rRNA.

One of the primary rRNA binding proteins, it binds directly to 16S rRNA where it helps nucleate assembly of the platform of the 30S subunit by binding and bridging several RNA helices of the 16S rRNA. Its function is as follows. Forms an intersubunit bridge (bridge B4) with the 23S rRNA of the 50S subunit in the ribosome. This chain is Small ribosomal subunit protein uS15, found in Prochlorococcus marinus (strain NATL2A).